A 347-amino-acid chain; its full sequence is MRVMIVDDSAVVRGMVTRWLEEAGFIIAAIAVDGGQALRKLADTSVDVCLLDIEMPVMSGLEALPKLLAAKPDLRVIMASTLTERGAEVTLRALDLGAADYIAKPSANKLGGADLYRKDLIEKVRHLGARAARPAPPQAAPRPTLAPPSSDPAGPIEAVVVASSTGGPPALRRFIAGLGADWTSPILIAQHMPPGFTRTLAQMLDPISHLTAREAQNGEPIVPGVIYVAPGDYHMTVRAAGGGGPSIHLDQGPEVNYCRPSADPLFESAARFWKGRVLGVVLTGMGRDGRDGAAVLAKVGGTIIAQDEATSVVWGMPGAVANAGLAEAVLPLDQIGPYIASRARSVA.

The region spanning Arg-2–Asp-119 is the Response regulatory domain. Asp-52 bears the 4-aspartylphosphate mark. The disordered stretch occupies residues Ala-131–Ala-153. Residues Pro-134–Ser-150 show a composition bias toward pro residues. A CheB-type methylesterase domain is found at Pro-152 to Val-346. Residues Ser-164, His-191, and Asp-288 contribute to the active site.

It belongs to the CheB family. In terms of processing, phosphorylated by CheA. Phosphorylation of the N-terminal regulatory domain activates the methylesterase activity.

Its subcellular location is the cytoplasm. The catalysed reaction is [protein]-L-glutamate 5-O-methyl ester + H2O = L-glutamyl-[protein] + methanol + H(+). The enzyme catalyses L-glutaminyl-[protein] + H2O = L-glutamyl-[protein] + NH4(+). Its function is as follows. Involved in chemotaxis. Part of a chemotaxis signal transduction system that modulates chemotaxis in response to various stimuli. Catalyzes the demethylation of specific methylglutamate residues introduced into the chemoreceptors (methyl-accepting chemotaxis proteins or MCP) by CheR. Also mediates the irreversible deamidation of specific glutamine residues to glutamic acid. The chain is Protein-glutamate methylesterase/protein-glutamine glutaminase 2 from Caulobacter vibrioides (strain ATCC 19089 / CIP 103742 / CB 15) (Caulobacter crescentus).